Consider the following 446-residue polypeptide: Deoxyguanosinetriphosphate triphosphohydrolase-like protein (446 aa).

The segment at 1-28 (MSSSVWQERRHGEDKQRRNDHRSPFQRD) is disordered. Residues 7-28 (QERRHGEDKQRRNDHRSPFQRD) are compositionally biased toward basic and acidic residues. In terms of domain architecture, HD spans 59–252 (RLTHSLEVSQ…MELADDIAYA (194 aa)).

It belongs to the dGTPase family. Type 2 subfamily.

The protein is Deoxyguanosinetriphosphate triphosphohydrolase-like protein of Shewanella sp. (strain MR-4).